The following is a 403-amino-acid chain: Acetate kinase (403 aa).

A Mg(2+)-binding site is contributed by asparagine 7. Lysine 14 provides a ligand contact to ATP. Arginine 97 is a substrate binding site. Aspartate 154 functions as the Proton donor/acceptor in the catalytic mechanism. ATP-binding positions include 213–217 (HLGNG), 287–289 (DMR), and 335–339 (GIGEN). Residue glutamate 388 participates in Mg(2+) binding.

Belongs to the acetokinase family. In terms of assembly, homodimer. Requires Mg(2+) as cofactor. The cofactor is Mn(2+).

The protein resides in the cytoplasm. The catalysed reaction is acetate + ATP = acetyl phosphate + ADP. It participates in metabolic intermediate biosynthesis; acetyl-CoA biosynthesis; acetyl-CoA from acetate: step 1/2. In terms of biological role, catalyzes the formation of acetyl phosphate from acetate and ATP. Can also catalyze the reverse reaction. The sequence is that of Acetate kinase from Synechococcus sp. (strain JA-2-3B'a(2-13)) (Cyanobacteria bacterium Yellowstone B-Prime).